The primary structure comprises 117 residues: Large ribosomal subunit protein bL20 (117 aa).

Belongs to the bacterial ribosomal protein bL20 family.

Binds directly to 23S ribosomal RNA and is necessary for the in vitro assembly process of the 50S ribosomal subunit. It is not involved in the protein synthesizing functions of that subunit. The chain is Large ribosomal subunit protein bL20 from Campylobacter hominis (strain ATCC BAA-381 / DSM 21671 / CCUG 45161 / LMG 19568 / NCTC 13146 / CH001A).